Reading from the N-terminus, the 626-residue chain is DNA mismatch repair protein MutL (626 aa).

This sequence belongs to the DNA mismatch repair MutL/HexB family.

In terms of biological role, this protein is involved in the repair of mismatches in DNA. It is required for dam-dependent methyl-directed DNA mismatch repair. May act as a 'molecular matchmaker', a protein that promotes the formation of a stable complex between two or more DNA-binding proteins in an ATP-dependent manner without itself being part of a final effector complex. The sequence is that of DNA mismatch repair protein MutL from Pelodictyon phaeoclathratiforme (strain DSM 5477 / BU-1).